A 236-amino-acid chain; its full sequence is Small ribosomal subunit protein uS3 (236 aa).

One can recognise a KH type-2 domain in the interval 39-107 (IRLYVLEELK…ETSLNIVEIH (69 aa)).

Belongs to the universal ribosomal protein uS3 family. As to quaternary structure, part of the 30S ribosomal subunit. Forms a tight complex with proteins S10 and S14.

In terms of biological role, binds the lower part of the 30S subunit head. Binds mRNA in the 70S ribosome, positioning it for translation. The sequence is that of Small ribosomal subunit protein uS3 from Bartonella quintana (strain Toulouse) (Rochalimaea quintana).